The primary structure comprises 552 residues: Putative lipase ATG15 (552 aa).

At 1–26 (MLHITEKEQTRGLRQLEKRGKRLLPP) the chain is on the cytoplasmic side. A helical; Signal-anchor for type II membrane protein transmembrane segment spans residues 27 to 49 (LIKFIWFCLISAACVAATTFYWL). The Lumenal portion of the chain corresponds to 50-552 (RLSPVHNIHK…WRFVSHDDKE (503 aa)). Asn63, Asn147, Asn239, Asn307, and Asn391 each carry an N-linked (GlcNAc...) asparagine glycan. Residue Ser409 is the Charge relay system of the active site. A glycan (N-linked (GlcNAc...) asparagine) is linked at Asn526.

This sequence belongs to the AB hydrolase superfamily. Lipase family. As to quaternary structure, binds to both phosphatidylinositol (PI) and phosphatidylinositol 3,5-bisphosphate (PIP2).

The protein localises to the endosome. It localises to the multivesicular body membrane. It is found in the prevacuolar compartment membrane. It catalyses the reaction a triacylglycerol + H2O = a diacylglycerol + a fatty acid + H(+). In terms of biological role, lipase which is essential for lysis of subvacuolar cytoplasm to vacuole targeted bodies and intravacuolar autophagic bodies. Involved in the lysis of intravacuolar multivesicular body (MVB) vesicles. The intravacuolar membrane disintegration by ATG15 is critical to life span extension. The protein is Putative lipase ATG15 (ATG15) of Lodderomyces elongisporus (strain ATCC 11503 / CBS 2605 / JCM 1781 / NBRC 1676 / NRRL YB-4239) (Yeast).